A 257-amino-acid chain; its full sequence is Imidazole glycerol phosphate synthase subunit HisF (257 aa).

Catalysis depends on residues Asp-11 and Asp-130.

The protein belongs to the HisA/HisF family. In terms of assembly, heterodimer of HisH and HisF.

It localises to the cytoplasm. The catalysed reaction is 5-[(5-phospho-1-deoxy-D-ribulos-1-ylimino)methylamino]-1-(5-phospho-beta-D-ribosyl)imidazole-4-carboxamide + L-glutamine = D-erythro-1-(imidazol-4-yl)glycerol 3-phosphate + 5-amino-1-(5-phospho-beta-D-ribosyl)imidazole-4-carboxamide + L-glutamate + H(+). The protein operates within amino-acid biosynthesis; L-histidine biosynthesis; L-histidine from 5-phospho-alpha-D-ribose 1-diphosphate: step 5/9. In terms of biological role, IGPS catalyzes the conversion of PRFAR and glutamine to IGP, AICAR and glutamate. The HisF subunit catalyzes the cyclization activity that produces IGP and AICAR from PRFAR using the ammonia provided by the HisH subunit. The chain is Imidazole glycerol phosphate synthase subunit HisF from Actinobacillus succinogenes (strain ATCC 55618 / DSM 22257 / CCUG 43843 / 130Z).